A 368-amino-acid chain; its full sequence is N-succinylamino acid racemase (368 aa).

2-succinylbenzoate contacts are provided by residues S135 and 161 to 163; that span reads KLK. K163 functions as the Proton donor in the catalytic mechanism. D189 provides a ligand contact to Mg(2+). N191 contributes to the 2-succinylbenzoate binding site. 2 residues coordinate Mg(2+): E214 and D239. K263 (proton acceptor) is an active-site residue. 2-succinylbenzoate is bound at residue I293.

It belongs to the mandelate racemase/muconate lactonizing enzyme family. MenC type 2 subfamily. Homooctamer. The cofactor is a divalent metal cation.

The catalysed reaction is N-acetyl-D-methionine = N-acetyl-L-methionine. It catalyses the reaction (1R,6R)-6-hydroxy-2-succinyl-cyclohexa-2,4-diene-1-carboxylate = 2-succinylbenzoate + H2O. Inhibited by EDTA and sulfhydryl reagents such as p-chloromercuribenzoic acid. Both OSBS and NAAAR activities are inhibited competitively by salicylhydroxamate. Its function is as follows. Acts as a N-succinylamino acid racemase (NSAR) that catalyzes the racemization of N-succinyl-phenylglycine and N-succinyl-methionine. Can catalyze the racemization of a broad range of N-acylamino acids, including N-acetyl-D/L-methionine, N-propionyl-D/L-methionine, N-butyryl-D/L-methionine and N-chloroacetyl-L-valine. Also converts 2-succinyl-6-hydroxy-2,4-cyclohexadiene-1-carboxylate (SHCHC) to 2-succinylbenzoate (OSB). Catalyzes both N-succinylamino acid racemization and OSB synthesis at equivalent rates. NSAR is probably the biological function of this enzyme. The polypeptide is N-succinylamino acid racemase (Amycolatopsis sp).